We begin with the raw amino-acid sequence, 139 residues long: Sec-independent protein translocase protein TatB (139 aa).

A helical membrane pass occupies residues 1 to 21 (MFDIGFTELLLVGLVALMVLG). The interval 69–139 (LDLEREMKQS…PLRSDRPSEP (71 aa)) is disordered. The segment covering 80–95 (MPPPASNPAATPPSPP) has biased composition (pro residues).

Belongs to the TatB family. In terms of assembly, the Tat system comprises two distinct complexes: a TatABC complex, containing multiple copies of TatA, TatB and TatC subunits, and a separate TatA complex, containing only TatA subunits. Substrates initially bind to the TatABC complex, which probably triggers association of the separate TatA complex to form the active translocon.

The protein resides in the cell inner membrane. In terms of biological role, part of the twin-arginine translocation (Tat) system that transports large folded proteins containing a characteristic twin-arginine motif in their signal peptide across membranes. Together with TatC, TatB is part of a receptor directly interacting with Tat signal peptides. TatB may form an oligomeric binding site that transiently accommodates folded Tat precursor proteins before their translocation. The sequence is that of Sec-independent protein translocase protein TatB from Stutzerimonas stutzeri (strain A1501) (Pseudomonas stutzeri).